Reading from the N-terminus, the 180-residue chain is ATP synthase subunit delta (180 aa).

The protein belongs to the ATPase delta chain family. As to quaternary structure, F-type ATPases have 2 components, F(1) - the catalytic core - and F(0) - the membrane proton channel. F(1) has five subunits: alpha(3), beta(3), gamma(1), delta(1), epsilon(1). CF(0) has four main subunits: a(1), b(1), b'(1) and c(10-14). The alpha and beta chains form an alternating ring which encloses part of the gamma chain. F(1) is attached to F(0) by a central stalk formed by the gamma and epsilon chains, while a peripheral stalk is formed by the delta, b and b' chains.

The protein resides in the cellular thylakoid membrane. Its function is as follows. F(1)F(0) ATP synthase produces ATP from ADP in the presence of a proton or sodium gradient. F-type ATPases consist of two structural domains, F(1) containing the extramembraneous catalytic core and F(0) containing the membrane proton channel, linked together by a central stalk and a peripheral stalk. During catalysis, ATP synthesis in the catalytic domain of F(1) is coupled via a rotary mechanism of the central stalk subunits to proton translocation. Functionally, this protein is part of the stalk that links CF(0) to CF(1). It either transmits conformational changes from CF(0) to CF(1) or is implicated in proton conduction. The polypeptide is ATP synthase subunit delta (Prochlorococcus marinus (strain MIT 9301)).